The following is a 157-amino-acid chain: Probable succinate transporter subunit YjjB (157 aa).

The next 4 helical transmembrane spans lie at 8–28 (FALA…AMVF), 50–70 (MILM…SMLV), 87–107 (VFTV…TAMI), and 129–149 (FLTA…PGLW).

Belongs to the ThrE exporter (TC 2.A.79) family. In terms of assembly, the transporter is composed of YjjB and YjjP.

It is found in the cell inner membrane. In terms of biological role, involved in succinate export with YjjP. Both proteins are required for export. The protein is Probable succinate transporter subunit YjjB of Escherichia coli (strain SE11).